Consider the following 360-residue polypeptide: MKNIFLHSLIVENYRNFKNLELKTDNIPITIIGENGSGKTNILEAISLFYPGRGLRSARLADICRESEDHCSVRALLQSKLGLAEFSTQIKRISNRRTTEYNNSKIANNELSKFTSMVWLTPQMEGIFMSGTSDRRKFFDRIVYNFDPKHAELVSKYEHYMQERNKILAEDMWDNNWLKTIEEKMADTSIYIANNRLKTLEFMQQAIDDLENEFPKAELSIDGMVEQKILNGEEDVVGFIAAELHKTRDKDKLLGRTSFGVHKSDFLVKHKHKNILAKFCSTGEQKAILIAIILAEMNYAIKLTKTAPILLLDEVFVHLDDRRRNYLTEFFISINLQLWVTATDLKGIEEFGNKSQLIKL.

An ATP-binding site is contributed by 33–40 (GENGSGKT).

This sequence belongs to the RecF family.

Its subcellular location is the cytoplasm. In terms of biological role, the RecF protein is involved in DNA metabolism; it is required for DNA replication and normal SOS inducibility. RecF binds preferentially to single-stranded, linear DNA. It also seems to bind ATP. This Rickettsia bellii (strain OSU 85-389) protein is DNA replication and repair protein RecF.